The following is a 155-amino-acid chain: Small ribosomal subunit protein uS7 (155 aa).

Belongs to the universal ribosomal protein uS7 family. In terms of assembly, part of the 30S ribosomal subunit. Contacts proteins S9 and S11.

Its function is as follows. One of the primary rRNA binding proteins, it binds directly to 16S rRNA where it nucleates assembly of the head domain of the 30S subunit. Is located at the subunit interface close to the decoding center, probably blocks exit of the E-site tRNA. In Thermosipho africanus (strain TCF52B), this protein is Small ribosomal subunit protein uS7.